The following is a 209-amino-acid chain: uncharacterized protein (209 aa).

Residues M1 to G167 enclose the Nudix hydrolase domain.

This is an uncharacterized protein from Orgyia pseudotsugata (Douglas-fir tussock moth).